Reading from the N-terminus, the 159-residue chain is 2-C-methyl-D-erythritol 2,4-cyclodiphosphate synthase (159 aa).

D9 and H11 together coordinate a divalent metal cation. 4-CDP-2-C-methyl-D-erythritol 2-phosphate contacts are provided by residues 9–11 (DVH) and 35–36 (HS). H43 provides a ligand contact to a divalent metal cation. Residues 57–59 (DLG), 62–66 (FPDTD), 133–136 (TTTE), F140, and R143 contribute to the 4-CDP-2-C-methyl-D-erythritol 2-phosphate site.

It belongs to the IspF family. As to quaternary structure, homotrimer. Requires a divalent metal cation as cofactor.

It carries out the reaction 4-CDP-2-C-methyl-D-erythritol 2-phosphate = 2-C-methyl-D-erythritol 2,4-cyclic diphosphate + CMP. Its pathway is isoprenoid biosynthesis; isopentenyl diphosphate biosynthesis via DXP pathway; isopentenyl diphosphate from 1-deoxy-D-xylulose 5-phosphate: step 4/6. Involved in the biosynthesis of isopentenyl diphosphate (IPP) and dimethylallyl diphosphate (DMAPP), two major building blocks of isoprenoid compounds. Catalyzes the conversion of 4-diphosphocytidyl-2-C-methyl-D-erythritol 2-phosphate (CDP-ME2P) to 2-C-methyl-D-erythritol 2,4-cyclodiphosphate (ME-CPP) with a corresponding release of cytidine 5-monophosphate (CMP). The chain is 2-C-methyl-D-erythritol 2,4-cyclodiphosphate synthase from Shouchella clausii (strain KSM-K16) (Alkalihalobacillus clausii).